A 230-amino-acid polypeptide reads, in one-letter code: MGQKIHPLGFRIGITQKHRSSWFANSKDYPVLLQEDHKIRSFIHSKLSNASIAKIEINRKVDQVEILIATARPGIVLGKSGAGIESLRKSLSLILDPSKQLRVNVVEIADPDSEATLVAEFITQQLEKRVAFRRAVRQAVQRAQRANTQGVKIQVSGRLNGAEIARSEWVREGRVPLQTLRADIDYCHRQAHTTYGVLGVKVWLFKGEILPESKSLESAYNQETPDSTAS.

The region spanning 39-109 (IRSFIHSKLS…QLRVNVVEIA (71 aa)) is the KH type-2 domain.

This sequence belongs to the universal ribosomal protein uS3 family. As to quaternary structure, part of the 30S ribosomal subunit.

It localises to the plastid. The protein resides in the chloroplast. This Pyropia yezoensis (Susabi-nori) protein is Small ribosomal subunit protein uS3c (rps3).